The chain runs to 224 residues: UPF0758 protein PSHAa2643 (224 aa).

Residues 102–224 (IFNSPNAVYD…CVSFAERGLI (123 aa)) enclose the MPN domain. Zn(2+)-binding residues include His-173, His-175, and Asp-186. The short motif at 173-186 (HNHPSGIAEPSQAD) is the JAMM motif element.

Belongs to the UPF0758 family.

The polypeptide is UPF0758 protein PSHAa2643 (Pseudoalteromonas translucida (strain TAC 125)).